The primary structure comprises 319 residues: Beta-ketoacyl-[acyl-carrier-protein] synthase III (319 aa).

Residues Cys112 and His246 contribute to the active site. The tract at residues 247 to 251 (QANKR) is ACP-binding. Asn276 is a catalytic residue.

The protein belongs to the thiolase-like superfamily. FabH family. Homodimer.

The protein resides in the cytoplasm. The enzyme catalyses malonyl-[ACP] + acetyl-CoA + H(+) = 3-oxobutanoyl-[ACP] + CO2 + CoA. It participates in lipid metabolism; fatty acid biosynthesis. Functionally, catalyzes the condensation reaction of fatty acid synthesis by the addition to an acyl acceptor of two carbons from malonyl-ACP. Catalyzes the first condensation reaction which initiates fatty acid synthesis and may therefore play a role in governing the total rate of fatty acid production. Possesses both acetoacetyl-ACP synthase and acetyl transacylase activities. Its substrate specificity determines the biosynthesis of branched-chain and/or straight-chain of fatty acids. The protein is Beta-ketoacyl-[acyl-carrier-protein] synthase III of Psychromonas ingrahamii (strain DSM 17664 / CCUG 51855 / 37).